Consider the following 177-residue polypeptide: Large ribosomal subunit protein uL6 (177 aa).

This sequence belongs to the universal ribosomal protein uL6 family. In terms of assembly, part of the 50S ribosomal subunit.

Functionally, this protein binds to the 23S rRNA, and is important in its secondary structure. It is located near the subunit interface in the base of the L7/L12 stalk, and near the tRNA binding site of the peptidyltransferase center. This is Large ribosomal subunit protein uL6 from Ectopseudomonas mendocina (strain ymp) (Pseudomonas mendocina).